The following is a 105-amino-acid chain: Thioredoxin (105 aa).

One can recognise a Thioredoxin domain in the interval valine 2–methionine 105. Residues cysteine 32 and cysteine 35 each act as nucleophile in the active site. An intrachain disulfide couples cysteine 32 to cysteine 35. S-nitrosocysteine occurs at positions 69 and 73.

Belongs to the thioredoxin family. In terms of processing, may be nitrosylated on several cysteine residues, depending on the oxidation state. Nitrosylated Cys-73 may serve as donor for nitrosylation of target proteins.

It localises to the nucleus. The protein resides in the cytoplasm. Its subcellular location is the secreted. Its function is as follows. Participates in various redox reactions through the reversible oxidation of its active center dithiol to a disulfide and catalyzes dithiol-disulfide exchange reactions. Plays a role in the reversible S-nitrosylation of cysteine residues in target proteins, and thereby contributes to the response to intracellular nitric oxide. Nitrosylates the active site Cys of CASP3 in response to nitric oxide (NO), and thereby inhibits caspase-3 activity. Induces the FOS/JUN AP-1 DNA binding activity in ionizing radiation (IR) cells through its oxidation/reduction status and stimulates AP-1 transcriptional activity. This chain is Thioredoxin (TXN), found in Ophiophagus hannah (King cobra).